Here is a 155-residue protein sequence, read N- to C-terminus: Lipoprotein signal peptidase (155 aa).

The next 2 helical transmembrane spans lie at 52–72 and 85–105; these read ILQG…AGIV and LGVA…DRVF. Active-site residues include D111 and D129. A helical membrane pass occupies residues 124–144; the sequence is IFNIADSSLCVGVILLFIQML.

It belongs to the peptidase A8 family.

It localises to the cell membrane. The enzyme catalyses Release of signal peptides from bacterial membrane prolipoproteins. Hydrolyzes -Xaa-Yaa-Zaa-|-(S,diacylglyceryl)Cys-, in which Xaa is hydrophobic (preferably Leu), and Yaa (Ala or Ser) and Zaa (Gly or Ala) have small, neutral side chains.. The protein operates within protein modification; lipoprotein biosynthesis (signal peptide cleavage). Its function is as follows. This protein specifically catalyzes the removal of signal peptides from prolipoproteins. The chain is Lipoprotein signal peptidase from Bacillus pumilus (strain SAFR-032).